The sequence spans 127 residues: uncharacterized protein (127 aa).

Residues 85-107 (VYLGKIGFVLLHVFYLSCIAYYD) form a helical membrane-spanning segment.

The protein localises to the mitochondrion membrane. This is an uncharacterized protein from Dictyostelium discoideum (Social amoeba).